The chain runs to 331 residues: N-arachidonyl glycine receptor (331 aa).

Residues 1–26 (MITLNNQDQPVPFNNSYPDEYEIAAL) are Extracellular-facing. Asn14 carries N-linked (GlcNAc...) asparagine glycosylation. The helical transmembrane segment at 27-47 (VFYSCIFIIGLFVNITALWVF) threads the bilayer. Over 48-56 (SCTTKKRTT) the chain is Cytoplasmic. A helical transmembrane segment spans residues 57–77 (VTIYMMNVALVDLIFIMTLPF). The Extracellular segment spans residues 78–95 (RMFYYAKDEWPFGEYFCQ). Cys94 and Cys172 are joined by a disulfide. The helical transmembrane segment at 96-116 (ILGALTVFYPSIALWLLAFIS) threads the bilayer. Residues 117–138 (ADRYMAIVQPKYAKELKNTCKA) are Cytoplasmic-facing. Residues 139–159 (VLACVGVWIMTLTTTIPLLLL) traverse the membrane as a helical segment. Over 160–191 (HKDPDKDSTPATCLKISDIVYLKAVNVLNFTR) the chain is Extracellular. An N-linked (GlcNAc...) asparagine glycan is attached at Asn188. Residues 192-212 (LTFFFLIPLFIMIGCYLVIIH) traverse the membrane as a helical segment. Topologically, residues 213-232 (NLLHGRTSKLKPKVKEKSIR) are cytoplasmic. Residues 233–253 (IIITLLVQVLVCFMPFHICFA) traverse the membrane as a helical segment. The Extracellular portion of the chain corresponds to 254–268 (FLMLGTGENSYSPWG). Residues 269–289 (AFTTFLMNLSTCLDVILYYIV) traverse the membrane as a helical segment. Over 290 to 331 (SKQFQARVISVMLYRNYLRGMRRKSFRSGSLRSLSNINSEML) the chain is Cytoplasmic. Phosphoserine is present on Ser322.

It belongs to the G-protein coupled receptor 1 family.

The protein localises to the cell membrane. It localises to the cytoplasmic vesicle membrane. Functionally, g protein-coupled receptor (GPCR) that plays a role in diverse physiological processes particularly within the immune and nervous systems. Becomes active when triggered by various endogenous ligands including endocannabinoid N-arachidonyl glycine (NAGly), delta-9-tetrahydrocannabinol or resolvin D2/RvD2 derived from the omega-3 fatty acid docosahexaenoic acid (DHA). Upon RvD2 binding, facilitates the resolution of inflammation, aiding in tissue repair and homeostasis. Mechanistically, RvD2 ligation initiates Galphas protein coupling, activation of cAMP-PKA signaling pathway and phosphorylation of STAT3, leading to RvD2-stimulated macrophage phagocytosis. Mediates NAGly-induced process of reorganization of actin filaments and induction of acrosomal exocytosis. Activation by N-arachidonoyl glycine (NAGly) can also induce apoptosis in macrophages. Plays a role in homeostasis of CD8+ subsets of intraepithelial lymphocytes (IELs) (CD8alphaalpha and CD8alphabeta IELs) in small intestine by supporting preferential migration of CD8alphaalpha T-cells to intraepithelial compartment over lamina propria compartment, and by mediating their reconstitution into small intestine after bone marrow transplant. Participates also in hypotensive responses, mediating reduction in intraocular and blood pressure. The sequence is that of N-arachidonyl glycine receptor from Macaca fascicularis (Crab-eating macaque).